The sequence spans 83 residues: UPF0457 protein YnzG (83 aa).

Belongs to the UPF0457 family.

In Bacillus subtilis (strain 168), this protein is UPF0457 protein YnzG (ynzG).